The following is a 256-amino-acid chain: MSVKNNPIGVIDSGVGGISVLKEAVKQLPYENFIYYGDSKNAPYGIKSVDEVRNLTFNVVEKLLKLNIKALVVACNTATSAAIDELREKYKNIPVIGIEPALKPAVELKRRGKIIIMATPMTLSEVKFKNLMEKYEKDSEIVKLPCPGLVELIEDGIVEGEKMQEYLRNKFKDYEKDDIAAFVLGCTHYPFVKKEIASIARDVPIIDGSQGTVMQLKRKLDKYDILNIGSEKGKIKIMNSLKDDKILDLSHRLLDL.

Substrate-binding positions include 12–13 (DS) and 44–45 (YG). C75 serves as the catalytic Proton donor/acceptor. 76–77 (NT) contacts substrate. C186 (proton donor/acceptor) is an active-site residue. Residue 187–188 (TH) coordinates substrate.

This sequence belongs to the aspartate/glutamate racemases family.

It carries out the reaction L-glutamate = D-glutamate. Its pathway is cell wall biogenesis; peptidoglycan biosynthesis. Functionally, provides the (R)-glutamate required for cell wall biosynthesis. This chain is Glutamate racemase, found in Clostridium acetobutylicum (strain ATCC 824 / DSM 792 / JCM 1419 / IAM 19013 / LMG 5710 / NBRC 13948 / NRRL B-527 / VKM B-1787 / 2291 / W).